The primary structure comprises 210 residues: Superoxide dismutase [Mn], mitochondrial (210 aa).

Residues histidine 29, histidine 77, aspartate 164, and histidine 168 each contribute to the Mn(2+) site.

It belongs to the iron/manganese superoxide dismutase family. In terms of assembly, homotetramer. It depends on Mn(2+) as a cofactor.

The protein localises to the mitochondrion matrix. It carries out the reaction 2 superoxide + 2 H(+) = H2O2 + O2. Its function is as follows. Destroys superoxide anion radicals which are normally produced within the cells and which are toxic to biological systems. The polypeptide is Superoxide dismutase [Mn], mitochondrial (sodB) (Aspergillus oryzae (strain ATCC 42149 / RIB 40) (Yellow koji mold)).